The sequence spans 373 residues: Muconate cycloisomerase 1 (373 aa).

Lysine 169 is a catalytic residue. Lysine 169 (proton acceptor) is an active-site residue. 3 residues coordinate Mn(2+): aspartate 198, glutamate 224, and aspartate 249. Glutamate 327 acts as the Proton donor in catalysis.

This sequence belongs to the mandelate racemase/muconate lactonizing enzyme family. The cofactor is Mn(2+).

The enzyme catalyses (S)-muconolactone = cis,cis-muconate + H(+). The chain is Muconate cycloisomerase 1 (catB) from Rhodococcus opacus (Nocardia opaca).